Reading from the N-terminus, the 886-residue chain is DNA mismatch repair protein MutS (886 aa).

641 to 648 is a binding site for ATP; it reads GPNMAGKS.

Belongs to the DNA mismatch repair MutS family.

Its function is as follows. This protein is involved in the repair of mismatches in DNA. It is possible that it carries out the mismatch recognition step. This protein has a weak ATPase activity. The polypeptide is DNA mismatch repair protein MutS (Rickettsia rickettsii (strain Sheila Smith)).